The chain runs to 396 residues: Elongation factor Tu (396 aa).

The tr-type G domain occupies 10 to 205 (KPHVNIGTIG…AVDESIPDPV (196 aa)). The G1 stretch occupies residues 19–26 (GHVDHGKT). A GTP-binding site is contributed by 19–26 (GHVDHGKT). A Mg(2+)-binding site is contributed by Thr26. Residues 62-66 (GITIN) form a G2 region. The tract at residues 83–86 (DAPG) is G3. Residues 83–87 (DAPGH) and 138–141 (NKAD) each bind GTP. The segment at 138 to 141 (NKAD) is G4. The segment at 175 to 177 (SAL) is G5.

It belongs to the TRAFAC class translation factor GTPase superfamily. Classic translation factor GTPase family. EF-Tu/EF-1A subfamily. Monomer.

It is found in the cytoplasm. The catalysed reaction is GTP + H2O = GDP + phosphate + H(+). In terms of biological role, GTP hydrolase that promotes the GTP-dependent binding of aminoacyl-tRNA to the A-site of ribosomes during protein biosynthesis. The polypeptide is Elongation factor Tu (Mycolicibacterium vanbaalenii (strain DSM 7251 / JCM 13017 / BCRC 16820 / KCTC 9966 / NRRL B-24157 / PYR-1) (Mycobacterium vanbaalenii)).